We begin with the raw amino-acid sequence, 419 residues long: Ras association domain-containing protein 8 (419 aa).

One can recognise a Ras-associating domain in the interval 1-82 (MELKVWVDGV…VQLILRRTGP (82 aa)). Phosphoserine is present on residues Ser105 and Ser129. A Phosphothreonine modification is found at Thr131. The disordered stretch occupies residues 372-399 (ASQADIETEAPFQSGSLKRPGSSRQLPS). The span at 382-399 (PFQSGSLKRPGSSRQLPS) shows a compositional bias: polar residues. At Ser387 the chain carries Phosphoserine.

This is Ras association domain-containing protein 8 (Rassf8) from Mus musculus (Mouse).